A 211-amino-acid chain; its full sequence is HTH-type transcriptional repressor FabR (211 aa).

Positions 10-70 (RTRRSLIEAA…TMVDESGLML (61 aa)) constitute an HTH tetR-type domain. The segment at residues 33–52 (SLREVSREAGIAPTSFYRHF) is a DNA-binding region (H-T-H motif).

In terms of assembly, homodimer.

Its subcellular location is the cytoplasm. In terms of biological role, represses the transcription of fabB, involved in unsaturated fatty acid (UFA) biosynthesis. By controlling UFA production, FabR directly influences the physical properties of the membrane bilayer. This chain is HTH-type transcriptional repressor FabR, found in Yersinia pseudotuberculosis serotype O:1b (strain IP 31758).